Reading from the N-terminus, the 326-residue chain is Vitamin B12 import system permease protein BtuC (326 aa).

9 consecutive transmembrane segments (helical) span residues 19 to 39 (LSVL…LWIL), 61 to 81 (LAVL…QALF), 88 to 108 (PGLL…VLLG), 112 to 132 (LPNW…TLIL), 146 to 166 (LLAG…AIYF), 184 to 204 (GGVD…LLWI), 240 to 260 (GWMV…GLVI), 274 to 294 (VLLP…DIVA), and 302 to 322 (ELPI…WLLL).

The protein belongs to the binding-protein-dependent transport system permease family. FecCD subfamily. As to quaternary structure, the complex is composed of two ATP-binding proteins (BtuD), two transmembrane proteins (BtuC) and a solute-binding protein (BtuF).

It is found in the cell inner membrane. Part of the ABC transporter complex BtuCDF involved in vitamin B12 import. Involved in the translocation of the substrate across the membrane. This chain is Vitamin B12 import system permease protein BtuC, found in Escherichia coli O6:K15:H31 (strain 536 / UPEC).